The primary structure comprises 496 residues: Acyltransferase M4 (496 aa).

Catalysis depends on H163, which acts as the Proton acceptor.

This sequence belongs to the plant acyltransferase family. Monomer.

It participates in secondary metabolite biosynthesis. In terms of biological role, acyltransferase; part of the gene cluster that mediates the biosynthesis of squalestatin S1 (SQS1, also known as zaragozic acid A), a heavily oxidized fungal polyketide that offers potent cholesterol lowering activity by targeting squalene synthase (SS). SQS1 is composed of a 2,8-dioxobicyclic[3.2.1]octane-3,4,5-tricarboxyclic acid core that is connected to two lipophilic polyketide arms. These initial steps feature the priming of an unusual benzoic acid starter unit onto the highly reducing polyketide synthase pks2, followed by oxaloacetate extension and product release to generate a tricarboxylic acid containing product. The phenylalanine ammonia lyase (PAL) M7 and the acyl-CoA ligase M9 are involved in transforming phenylalanine into benzoyl-CoA. The citrate synthase-like protein R3 is involved in connecting the C-alpha-carbons of the hexaketide chain and oxaloacetate to afford the tricarboxylic acid unit. The potential hydrolytic enzymes, M8 and M10, are in close proximity to pks2 and may participate in product release. On the other side, the tetraketide arm is synthesized by a the squalestatin tetraketide synthase pks1 and enzymatically esterified to the core in the last biosynthetic step, by the acetyltransferase M4. The biosynthesis of the tetraketide must involve 3 rounds of chain extension. After the first and second rounds methyl-transfer occurs, and in all rounds of extension the ketoreductase and dehydratase are active. The enoyl reductase and C-MeT of pks1 are not active in the final round of extension. The acetyltransferase M4 appears to have a broad substrate selectivity for its acyl CoA substrate, allowing the in vitro synthesis of novel squalestatins. The biosynthesis of SQS1 requires several oxidative steps likely performed by oxidoreductases M1, R1 and R2. Finally, in support of the identification of the cluster as being responsible for SQS1 production, the cluster contains a gene encoding a putative squalene synthase (SS) R6, suggesting a likely mechanism for self-resistance. The protein is Acyltransferase M4 of Phoma sp. (strain ATCC 20986 / MF5453).